Reading from the N-terminus, the 248-residue chain is Triosephosphate isomerase (248 aa).

A substrate-binding site is contributed by 9–11 (NWK). The active-site Electrophile is His-94. Residue Glu-166 is the Proton acceptor of the active site. Residues Gly-172, Ser-212, and 233–234 (GG) contribute to the substrate site.

Belongs to the triosephosphate isomerase family. Homodimer.

It localises to the cytoplasm. The enzyme catalyses D-glyceraldehyde 3-phosphate = dihydroxyacetone phosphate. Its pathway is carbohydrate biosynthesis; gluconeogenesis. It functions in the pathway carbohydrate degradation; glycolysis; D-glyceraldehyde 3-phosphate from glycerone phosphate: step 1/1. Involved in the gluconeogenesis. Catalyzes stereospecifically the conversion of dihydroxyacetone phosphate (DHAP) to D-glyceraldehyde-3-phosphate (G3P). This Thermoanaerobacter sp. (strain X514) protein is Triosephosphate isomerase.